Reading from the N-terminus, the 363-residue chain is Probable tRNA pseudouridine synthase D (363 aa).

The Nucleophile role is filled by aspartate 82. The TRUD domain occupies 151 to 363 (YLPAYIGYQR…IARTDPRLFT (213 aa)).

Belongs to the pseudouridine synthase TruD family.

It carries out the reaction uridine(13) in tRNA = pseudouridine(13) in tRNA. Its function is as follows. Could be responsible for synthesis of pseudouridine from uracil-13 in transfer RNAs. In Sulfurisphaera tokodaii (strain DSM 16993 / JCM 10545 / NBRC 100140 / 7) (Sulfolobus tokodaii), this protein is Probable tRNA pseudouridine synthase D.